Here is a 762-residue protein sequence, read N- to C-terminus: 5-methyltetrahydropteroyltriglutamate--homocysteine methyltransferase (762 aa).

5-methyltetrahydropteroyltri-L-glutamate is bound by residues Arg17–Lys20 and Lys111. Residues Ile435–Ser437 and Glu488 each bind L-homocysteine. L-methionine contacts are provided by residues Ile435–Ser437 and Glu488. 5-methyltetrahydropteroyltri-L-glutamate-binding positions include Arg519–Cys520 and Trp565. Asp603 is a binding site for L-homocysteine. Asp603 is a binding site for L-methionine. Position 609 (Glu609) interacts with 5-methyltetrahydropteroyltri-L-glutamate. The Zn(2+) site is built by His645, Cys647, and Glu669. His698 serves as the catalytic Proton donor. A Zn(2+)-binding site is contributed by Cys730.

The protein belongs to the vitamin-B12 independent methionine synthase family. The cofactor is Zn(2+).

It catalyses the reaction 5-methyltetrahydropteroyltri-L-glutamate + L-homocysteine = tetrahydropteroyltri-L-glutamate + L-methionine. It participates in amino-acid biosynthesis; L-methionine biosynthesis via de novo pathway; L-methionine from L-homocysteine (MetE route): step 1/1. Functionally, catalyzes the transfer of a methyl group from 5-methyltetrahydrofolate to homocysteine resulting in methionine formation. This is 5-methyltetrahydropteroyltriglutamate--homocysteine methyltransferase from Bacillus cereus (strain G9842).